The sequence spans 227 residues: Cytochrome c oxidase subunit 2 (227 aa).

At 1–14 (MAYPFQLGLQDATS) the chain is on the mitochondrial intermembrane side. A helical transmembrane segment spans residues 15–45 (PIMEELLHFHDHTLMIVFLISSLVLYIISLM). Residues 46–59 (LTTKLTHTSTMDAQ) lie on the Mitochondrial matrix side of the membrane. Residues 60 to 87 (EVETVWTILPAIILISIALPSLRILYMM) form a helical membrane-spanning segment. The Mitochondrial intermembrane segment spans residues 88 to 227 (DEINNPSLTV…YFEAWSTLMM (140 aa)). Residues H161, C196, E198, C200, H204, and M207 each contribute to the Cu cation site. E198 lines the Mg(2+) pocket. A Phosphotyrosine modification is found at Y218.

This sequence belongs to the cytochrome c oxidase subunit 2 family. As to quaternary structure, component of the cytochrome c oxidase (complex IV, CIV), a multisubunit enzyme composed of 14 subunits. The complex is composed of a catalytic core of 3 subunits MT-CO1, MT-CO2 and MT-CO3, encoded in the mitochondrial DNA, and 11 supernumerary subunits COX4I, COX5A, COX5B, COX6A, COX6B, COX6C, COX7A, COX7B, COX7C, COX8 and NDUFA4, which are encoded in the nuclear genome. The complex exists as a monomer or a dimer and forms supercomplexes (SCs) in the inner mitochondrial membrane with NADH-ubiquinone oxidoreductase (complex I, CI) and ubiquinol-cytochrome c oxidoreductase (cytochrome b-c1 complex, complex III, CIII), resulting in different assemblies (supercomplex SCI(1)III(2)IV(1) and megacomplex MCI(2)III(2)IV(2)). Found in a complex with TMEM177, COA6, COX18, COX20, SCO1 and SCO2. Interacts with TMEM177 in a COX20-dependent manner. Interacts with COX20. Interacts with COX16. Requires Cu cation as cofactor.

The protein resides in the mitochondrion inner membrane. The catalysed reaction is 4 Fe(II)-[cytochrome c] + O2 + 8 H(+)(in) = 4 Fe(III)-[cytochrome c] + 2 H2O + 4 H(+)(out). Functionally, component of the cytochrome c oxidase, the last enzyme in the mitochondrial electron transport chain which drives oxidative phosphorylation. The respiratory chain contains 3 multisubunit complexes succinate dehydrogenase (complex II, CII), ubiquinol-cytochrome c oxidoreductase (cytochrome b-c1 complex, complex III, CIII) and cytochrome c oxidase (complex IV, CIV), that cooperate to transfer electrons derived from NADH and succinate to molecular oxygen, creating an electrochemical gradient over the inner membrane that drives transmembrane transport and the ATP synthase. Cytochrome c oxidase is the component of the respiratory chain that catalyzes the reduction of oxygen to water. Electrons originating from reduced cytochrome c in the intermembrane space (IMS) are transferred via the dinuclear copper A center (CU(A)) of subunit 2 and heme A of subunit 1 to the active site in subunit 1, a binuclear center (BNC) formed by heme A3 and copper B (CU(B)). The BNC reduces molecular oxygen to 2 water molecules using 4 electrons from cytochrome c in the IMS and 4 protons from the mitochondrial matrix. The chain is Cytochrome c oxidase subunit 2 (MT-CO2) from Lycaon pictus (African wild dog).